The chain runs to 60 residues: U-scutigerotoxin(02)-Tl4a (60 aa).

Belongs to the scutigerotoxin-02 family. In terms of processing, contains 3 disulfide bonds. Expressed by the venom gland.

Its subcellular location is the secreted. This chain is U-scutigerotoxin(02)-Tl4a, found in Thereuopoda longicornis (Long-legged centipede).